A 364-amino-acid polypeptide reads, in one-letter code: Fructose-bisphosphate aldolase A (364 aa).

Tyr-5 is subject to Phosphotyrosine. Phosphothreonine is present on Thr-9. Residues Ser-36 and Ser-39 each carry the phosphoserine modification. Lys-42 bears the N6-acetyllysine; alternate mark. Lys-42 participates in a covalent cross-link: Glycyl lysine isopeptide (Lys-Gly) (interchain with G-Cter in SUMO1); alternate. A Glycyl lysine isopeptide (Lys-Gly) (interchain with G-Cter in SUMO2); alternate cross-link involves residue Lys-42. Arg-43 provides a ligand contact to beta-D-fructose 1,6-bisphosphate. Phosphoserine is present on Ser-46. Lys-99 is modified (N6-(2-hydroxyisobutyryl)lysine). Lys-108 is modified (N6-acetyllysine). At Lys-111 the chain carries N6-acetyllysine; alternate. Lys-111 carries the N6-malonyllysine; alternate modification. Ser-132 bears the Phosphoserine mark. Lys-147 is subject to N6-(2-hydroxyisobutyryl)lysine. The active-site Proton acceptor is Glu-188. The active-site Schiff-base intermediate with dihydroxyacetone-P is Lys-230. A Phosphoserine modification is found at Ser-272. Beta-D-fructose 1,6-bisphosphate-binding positions include 272 to 274 (SGG), Ser-301, and Arg-304. At Lys-312 the chain carries N6-malonyllysine. Lys-330 carries the N6-acetyllysine modification.

The protein belongs to the class I fructose-bisphosphate aldolase family. In terms of assembly, homotetramer. Interacts with SNX9 and WAS. Interacts with FBP2; the interaction blocks FBP2 inhibition by physiological concentrations of AMP and reduces inhibition by Ca(2+). As to expression, expressed in muscle, brain and hepatoma cells.

Its subcellular location is the cytoplasm. It is found in the myofibril. It localises to the sarcomere. The protein localises to the i band. The protein resides in the m line. It catalyses the reaction beta-D-fructose 1,6-bisphosphate = D-glyceraldehyde 3-phosphate + dihydroxyacetone phosphate. Its pathway is carbohydrate degradation; glycolysis; D-glyceraldehyde 3-phosphate and glycerone phosphate from D-glucose: step 4/4. Its function is as follows. Catalyzes the reversible conversion of beta-D-fructose 1,6-bisphosphate (FBP) into two triose phosphate and plays a key role in glycolysis and gluconeogenesis. In addition, may also function as scaffolding protein. The sequence is that of Fructose-bisphosphate aldolase A (Aldoa) from Rattus norvegicus (Rat).